The chain runs to 320 residues: Olfactory receptor 2AT4 (320 aa).

At 1–31 (MDATACNESVDGSPVFYLLGIPSLPETFFLP) the chain is on the extracellular side. N7 carries an N-linked (GlcNAc...) asparagine glycan. The helical transmembrane segment at 32–52 (VFFIFLLFYLLILMGNALILV) threads the bilayer. Topologically, residues 53-62 (AVVAEPSLHK) are cytoplasmic. The helical transmembrane segment at 63-83 (PMYFFLINLSTLDILFTTTTV) threads the bilayer. At 84–102 (PKMLSLFLLGDRFLSFSSC) the chain is on the extracellular side. C102 and C184 are joined by a disulfide. A helical transmembrane segment spans residues 103–123 (LLQMYLFQSFTCSEAFILVVM). Residues 124-145 (AYDRYVAICHPLHYPVLMNPQT) are Cytoplasmic-facing. A helical membrane pass occupies residues 146–166 (NATLAASAWLTALLLPIPAVV). At 167–200 (RTSQMAYNSIAYIYHCFCDHLAVVQASCSDTTPQ) the chain is on the extracellular side. The helical transmembrane segment at 201–221 (TLMGFCIAMVVSFLPLLLVLL) threads the bilayer. The Cytoplasmic segment spans residues 222–245 (SYVHILASVLRISSLEGRAKAFST). The helical transmembrane segment at 246–266 (CSSHLLVVGTYYSSIAIAYVA) threads the bilayer. The Extracellular portion of the chain corresponds to 267-276 (YRADLPLDFH). A helical membrane pass occupies residues 277–297 (IMGNVVYAILTPILNPLIYTL). The Cytoplasmic portion of the chain corresponds to 298–320 (RNRDVKAAITKIMSQDPGCDRSI).

It belongs to the G-protein coupled receptor 1 family. As to expression, detected in the keratinocytes of the epidermis (at protein level). Detected in hair follicles in proximal outer root sheath and hair matrix keratinocytes (at protein level).

It is found in the cell membrane. Its function is as follows. Olfactory receptor. Activated by the synthetic sandalwood odorant sandalore. Endogenous ligand is unknown. The activity of this receptor is probably mediated by G proteins which induce elevation of intracellular Ca(2+), a cAMP-dependent pathway and phosphorylation of MAPK1/ERK2, MAPK3/ERK1 and p38 MAPKs. Activation of OR2AT4 induces proliferation, migration, and re-epithelialization during wound-healing processes of keratinocytes. Stimulation of OR2AT4 by sandalore promotes hair growth by decreasing apoptosis and increasing production of the anagen-prolonging growth factor IGF1 as well as other pathways involving various kinases. The sequence is that of Olfactory receptor 2AT4 from Homo sapiens (Human).